The primary structure comprises 329 residues: Stimulator of interferon genes protein (329 aa).

Topologically, residues 1–4 (MACV) are cytoplasmic. The helical transmembrane segment at 5–25 (LAIGSILFVWILGKGKYSGAQ) threads the bilayer. A topological domain (lumenal) is located at residue Leu26. A helical membrane pass occupies residues 27-52 (IYRMATNFAISQGCCLVTCACELTEE). The Cytoplasmic segment spans residues 53–74 (IKHLHTRYNGHYWRALKASFNL). A helical membrane pass occupies residues 75 to 88 (SCAAFVTAILCYVF). The Lumenal segment spans residues 89-98 (YEPKLMASLP). Residues 99 to 116 (LTIDITLTLLSWLFCWIL) form a helical membrane-spanning segment. The Cytoplasmic segment spans residues 117-329 (GIQGPTPATI…QQHSEEYSML (213 aa)). The tract at residues 135-325 (LNVAHGLAWS…KHIRQQHSEE (191 aa)) is cyclic dinucleotide-binding domain (CBD). Residues Ser144, Tyr149, Arg220, and Thr245 each coordinate 2',3'-cGAMP. Residues Ser144, Tyr149, 220-223 (RVFK), and Thr245 each bind 3',3'-c-di-GMP.

It belongs to the STING family. As to quaternary structure, homodimer; forms a homodimer in absence of cyclic nucleotide (c-di-GMP or cGAMP). Homotetramer; in presence of cyclic nucleotide (c-di-GMP or cGAMP), forms tetramers and higher-order oligomers through side-by-side packing.

It is found in the endoplasmic reticulum membrane. The protein resides in the cytoplasm. It localises to the perinuclear region. The protein localises to the endoplasmic reticulum-Golgi intermediate compartment membrane. Its subcellular location is the golgi apparatus membrane. It is found in the cytoplasmic vesicle. The protein resides in the autophagosome membrane. The enzyme catalyses H(+)(in) = H(+)(out). In terms of biological role, sensor of cytosolic DNA from bacteria and viruses that promotes autophagy. Acts by recognizing and binding cyclic GMP-AMP (cGAMP), a messenger produced by CGAS in response to DNA in the cytosol. Exhibits guanine base-specific ligand recognition: binds 3'-3'linked cGAMP, 2'-3' linked cGAMP and 3'-3' linked c-di-GMP with much greater affinity as compared to 3'-3' linked c-di-AMP. Following cGAMP-binding, promotes the formation of autophagosomes, leading to target cytosolic DNA for degradation by the lysosome. Promotes autophagy by acting as a proton channel that directs proton efflux from the Golgi to facilitate LC3 lipidation. Lacks the C-terminal tail (CTT) found in other vertebrate orthologs which is essential for interferon signaling. In Xenopus tropicalis (Western clawed frog), this protein is Stimulator of interferon genes protein.